We begin with the raw amino-acid sequence, 256 residues long: L-erythrulose-1-phosphate isomerase (256 aa).

His96 (electrophile) is an active-site residue. Glu169 (proton acceptor) is an active-site residue. The substrate site is built by Gly175 and Ser212.

This sequence belongs to the triosephosphate isomerase family. As to quaternary structure, homodimer.

It localises to the cytoplasm. The enzyme catalyses L-erythrulose 1-phosphate = D-erythrulose 4-phosphate. It participates in carbohydrate metabolism; erythritol degradation. In terms of biological role, catalyzes the isomerization of D-erythrulose-4P to L-erythrulose-1P. The polypeptide is L-erythrulose-1-phosphate isomerase (Brucella melitensis biotype 1 (strain ATCC 23456 / CCUG 17765 / NCTC 10094 / 16M)).